The primary structure comprises 353 residues: Photosystem II protein D1 (353 aa).

Position 2 is an N-acetylthreonine (T2). Residue T2 is modified to Phosphothreonine. 3 helical membrane-spanning segments follow: residues 29–46 (YIGW…TATS), 118–133 (HFLL…EWEL), and 142–156 (WIAV…AATA). H118 contacts chlorophyll a. Residue Y126 participates in pheophytin a binding. [CaMn4O5] cluster-binding residues include D170 and E189. Residues 197–218 (FHMLGVAGVFGGSLFSAMHGSL) form a helical membrane-spanning segment. Position 198 (H198) interacts with chlorophyll a. A quinone contacts are provided by residues H215 and 264–265 (SF). H215 is a Fe cation binding site. Fe cation is bound at residue H272. A helical transmembrane segment spans residues 274–288 (FLAAWPVIGIWFTAL). Positions 332, 333, 342, and 344 each coordinate [CaMn4O5] cluster. A propeptide spanning residues 345 to 353 (AIEAPSTNG) is cleaved from the precursor.

This sequence belongs to the reaction center PufL/M/PsbA/D family. As to quaternary structure, PSII is composed of 1 copy each of membrane proteins PsbA, PsbB, PsbC, PsbD, PsbE, PsbF, PsbH, PsbI, PsbJ, PsbK, PsbL, PsbM, PsbT, PsbX, PsbY, PsbZ, Psb30/Ycf12, at least 3 peripheral proteins of the oxygen-evolving complex and a large number of cofactors. It forms dimeric complexes. It depends on The D1/D2 heterodimer binds P680, chlorophylls that are the primary electron donor of PSII, and subsequent electron acceptors. It shares a non-heme iron and each subunit binds pheophytin, quinone, additional chlorophylls, carotenoids and lipids. D1 provides most of the ligands for the Mn4-Ca-O5 cluster of the oxygen-evolving complex (OEC). There is also a Cl(-1) ion associated with D1 and D2, which is required for oxygen evolution. The PSII complex binds additional chlorophylls, carotenoids and specific lipids. as a cofactor. Post-translationally, tyr-161 forms a radical intermediate that is referred to as redox-active TyrZ, YZ or Y-Z. In terms of processing, C-terminally processed by CTPA; processing is essential to allow assembly of the oxygen-evolving complex and thus photosynthetic growth.

The protein resides in the plastid. It localises to the chloroplast thylakoid membrane. It catalyses the reaction 2 a plastoquinone + 4 hnu + 2 H2O = 2 a plastoquinol + O2. Photosystem II (PSII) is a light-driven water:plastoquinone oxidoreductase that uses light energy to abstract electrons from H(2)O, generating O(2) and a proton gradient subsequently used for ATP formation. It consists of a core antenna complex that captures photons, and an electron transfer chain that converts photonic excitation into a charge separation. The D1/D2 (PsbA/PsbD) reaction center heterodimer binds P680, the primary electron donor of PSII as well as several subsequent electron acceptors. This Amaranthus hybridus (Slim amaranth) protein is Photosystem II protein D1.